The sequence spans 379 residues: 2-nitroimidazole nitrohydrolase (379 aa).

Catalysis depends on cysteine 357, which acts as the Amidino-cysteine intermediate.

This sequence belongs to the arginine deiminase family.

The catalysed reaction is 2-nitroimidazole + H2O = 1,3-dihydro-2H-imidazol-2-one + nitrite + H(+). In terms of biological role, involved in the biodegradation of 2-Nitroimidazole (2NI) which is a natural antibiotic and an analog of the synthetic nitroimidazoles used for treatment of tuberculosis, Chagas disease (also called American Trypanosomiasis) and cancer. Catalyzes the hydrolytic denitration of 2NI to produce imidazol-2-one and nitrite. It is also active against the 2NI synthetic derivative benznidazole. NnhA confers drug resistance to 2NI. The sequence is that of 2-nitroimidazole nitrohydrolase (nnhA) from Mycobacterium sp. (strain JS330).